Consider the following 271-residue polypeptide: Bifunctional protein FolD (271 aa).

NADP(+)-binding positions include 154 to 156, threonine 181, and isoleucine 222; that span reads GRS.

The protein belongs to the tetrahydrofolate dehydrogenase/cyclohydrolase family. Homodimer.

The catalysed reaction is (6R)-5,10-methylene-5,6,7,8-tetrahydrofolate + NADP(+) = (6R)-5,10-methenyltetrahydrofolate + NADPH. It catalyses the reaction (6R)-5,10-methenyltetrahydrofolate + H2O = (6R)-10-formyltetrahydrofolate + H(+). The protein operates within one-carbon metabolism; tetrahydrofolate interconversion. In terms of biological role, catalyzes the oxidation of 5,10-methylenetetrahydrofolate to 5,10-methenyltetrahydrofolate and then the hydrolysis of 5,10-methenyltetrahydrofolate to 10-formyltetrahydrofolate. The sequence is that of Bifunctional protein FolD from Thermosipho africanus (strain TCF52B).